The primary structure comprises 131 residues: D-ribose pyranase (131 aa).

Residue His-20 is the Proton donor of the active site. Residues Asp-28, His-98, and 120 to 122 (FSN) contribute to the substrate site.

Belongs to the RbsD / FucU family. RbsD subfamily. As to quaternary structure, homodecamer.

The protein resides in the cytoplasm. The catalysed reaction is beta-D-ribopyranose = beta-D-ribofuranose. Its pathway is carbohydrate metabolism; D-ribose degradation; D-ribose 5-phosphate from beta-D-ribopyranose: step 1/2. Functionally, catalyzes the interconversion of beta-pyran and beta-furan forms of D-ribose. In Levilactobacillus brevis (strain ATCC 367 / BCRC 12310 / CIP 105137 / JCM 1170 / LMG 11437 / NCIMB 947 / NCTC 947) (Lactobacillus brevis), this protein is D-ribose pyranase.